A 4731-amino-acid polypeptide reads, in one-letter code: Dynein axonemal heavy chain 8 (4731 aa).

Residues 1-145 form a disordered region; that stretch reads MESEEGNAEP…SKFRRSMTGI (145 aa). The segment covering 9–55 has biased composition (pro residues); the sequence is EPPPPSEEAPPPVVEEAPPPLPPEDTAPPPPEEQAPPPEGDAAPPPT. Positions 66-75 are enriched in basic and acidic residues; sequence EAPHPEDPKL. Residues 94–106 show a composition bias toward acidic residues; the sequence is SDEEVTLPEDEES. Over residues 122–133 the composition is skewed to polar residues; it reads SVLSDGISQSSR. Positions 145–169 form a coiled coil; sequence IPNLQETLKEKQARFREARENRKMK. At serine 917 the chain carries Phosphoserine. A disordered region spans residues 1177 to 1201; it reads FQNNSRGSDQPPASGKPLKKEERSF. Residues 1543–1567 are a coiled coil; that stretch reads DVDIEKINAELQEFQNRCRKLPRAL. 4 AAA regions span residues 2049 to 2271, 2331 to 2550, 2657 to 2910, and 3021 to 3275; these read YQNE…VLRT, SAVD…KLSL, FYPT…IWQG, and QFNE…YRRR. ATP contacts are provided by residues 2087–2094 and 2369–2376; these read GPAGTGKT and GPSGSGKT. Positions 3290–3587 are stalk; it reads YKSIYTDKVK…MDLLNDADMC (298 aa). 3 coiled-coil regions span residues 3313-3405, 3531-3583, and 3836-3871; these read DKLM…ALNT, LKAN…LLND, and RVIL…DNLL. AAA regions lie at residues 3673 to 3903 and 4118 to 4332; these read LVDP…EVSE and ARKY…FIQN.

The protein belongs to the dynein heavy chain family. As to quaternary structure, consists of at least two heavy chains and a number of intermediate and light chains. In terms of tissue distribution, isoform 1 and/or isoform 2 are expressed in spermatocytes and mature sperm (at protein level). Testis-specific. Accumulates exclusively in mid to late spermatocytes.

It is found in the cytoplasm. The protein resides in the cytoskeleton. Its subcellular location is the flagellum axoneme. In terms of biological role, force generating protein component of the outer dynein arms (ODAs) in the sperm flagellum. Produces force towards the minus ends of microtubules. Dynein has ATPase activity; the force-producing power stroke is thought to occur on release of ADP. Involved in sperm motility; implicated in sperm flagellar assembly. This Mus musculus (Mouse) protein is Dynein axonemal heavy chain 8 (Dnah8).